Consider the following 440-residue polypeptide: Beta-1,3-galactosyl-O-glycosyl-glycoprotein beta-1,6-N-acetylglucosaminyltransferase (440 aa).

Topologically, residues 1-9 (MKMAGWKKK) are cytoplasmic. The helical; Signal-anchor for type II membrane protein transmembrane segment at 10–30 (LCPGHHLWALGCYMLLAVVSL) threads the bilayer. At 31–440 (RLSLRFKCDV…RHKAIYGTEL (410 aa)) the chain is on the lumenal side. 2 N-linked (GlcNAc...) asparagine; by host glycosylation sites follow: asparagine 72 and asparagine 108. 4 disulfides stabilise this stretch: cysteine 73-cysteine 230, cysteine 164-cysteine 384, cysteine 185-cysteine 212, and cysteine 393-cysteine 425.

Belongs to the glycosyltransferase 14 family.

It localises to the host Golgi apparatus membrane. The catalysed reaction is a 3-O-[beta-D-galactosyl-(1-&gt;3)-N-acetyl-alpha-D-galactosaminyl]-L-seryl-[protein] + UDP-N-acetyl-alpha-D-glucosamine = 3-O-{beta-D-galactosyl-(1-&gt;3)-[N-acetyl-beta-D-glucosaminyl-(1-&gt;6)]-N-acetyl-alpha-D-galactosaminyl}-L-seryl-[protein] + UDP + H(+). The enzyme catalyses a 3-O-[beta-D-galactosyl-(1-&gt;3)-N-acetyl-alpha-D-galactosaminyl]-L-threonyl-[protein] + UDP-N-acetyl-alpha-D-glucosamine = a 3-O-{beta-D-galactosyl-(1-&gt;3)-[N-acetyl-beta-D-glucosaminyl-(1-&gt;6)]-N-acetyl-alpha-D-galactosaminyl}-L-threonyl-[protein] + UDP + H(+). It carries out the reaction a beta-D-Gal-(1-&gt;4)-beta-D-GlcNAc-(1-&gt;3)-beta-D-Gal-(1-&gt;4)-beta-D-GlcNAc derivative + UDP-N-acetyl-alpha-D-glucosamine = a beta-D-Gal-(1-&gt;4)-beta-D-GlcNAc-(1-&gt;3)-[beta-D-GlcNAc-(1-&gt;6)]-beta-D-Gal-(1-&gt;4)-N-acetyl-beta-D-glucosaminyl derivative + UDP + H(+). It catalyses the reaction 3-O-[N-acetyl-beta-D-glucosaminyl-(1-&gt;3)-N-acetyl-alpha-D-galactosaminyl]-L-seryl-[protein] + UDP-N-acetyl-alpha-D-glucosamine = 3-O-[N-acetyl-beta-D-glucosaminyl-(1-&gt;3)-[N-acetyl-beta-D-glucosaminyl-(1-&gt;6)]-N-acetyl-alpha-D-galactosaminyl]-L-seryl-[protein] + UDP + H(+). The catalysed reaction is a 3-O-[N-acetyl-beta-D-glucosaminyl-(1-&gt;3)-N-acetyl-alpha-D-galactosaminyl]-L-threonyl-[protein] + UDP-N-acetyl-alpha-D-glucosamine = 3-O-[N-acetyl-beta-D-glucosaminyl-(1-&gt;3)-[N-acetyl-beta-D-glucosaminyl-(1-&gt;6)]-N-acetyl-alpha-D-galactosaminyl]-L-threonyl-[protein] + UDP + H(+). It participates in protein modification; protein glycosylation. Its function is as follows. Non-essential glycosyltransferase that can synthesize all known mucin beta 6 N-acetylglucosaminides. Mediates core 2 and core 4 O-glycan branching, 2 important steps in mucin-type biosynthesis. Has also I-branching enzyme activity by converting linear into branched poly-N-acetyllactosaminoglycans. Contributes to the post-translational modifications of structural proteins. In Bovine herpesvirus 4 (strain LVR140) (BoHV-4), this protein is Beta-1,3-galactosyl-O-glycosyl-glycoprotein beta-1,6-N-acetylglucosaminyltransferase (Bo17).